The primary structure comprises 126 residues: MAPEEVTITVRLIRSFEHRNFKPVVYHGVNLDQTVKEFIIFLKQDVPLRTSLPPPFRNYKYDTLKIIHQAHKSKTNELVLSLEDDDRLLLKEDSTLKAAGIASETEIAFFCEEDYKNYKANPISSW.

It belongs to the UPF0538 family.

The protein is UPF0538 protein C2orf76 homolog of Pongo abelii (Sumatran orangutan).